Consider the following 217-residue polypeptide: ATP-dependent Clp protease proteolytic subunit (217 aa).

Serine 121 (nucleophile) is an active-site residue. Histidine 146 is an active-site residue.

Belongs to the peptidase S14 family. As to quaternary structure, fourteen ClpP subunits assemble into 2 heptameric rings which stack back to back to give a disk-like structure with a central cavity, resembling the structure of eukaryotic proteasomes.

The protein localises to the cytoplasm. The enzyme catalyses Hydrolysis of proteins to small peptides in the presence of ATP and magnesium. alpha-casein is the usual test substrate. In the absence of ATP, only oligopeptides shorter than five residues are hydrolyzed (such as succinyl-Leu-Tyr-|-NHMec, and Leu-Tyr-Leu-|-Tyr-Trp, in which cleavage of the -Tyr-|-Leu- and -Tyr-|-Trp bonds also occurs).. Its function is as follows. Cleaves peptides in various proteins in a process that requires ATP hydrolysis. Has a chymotrypsin-like activity. Plays a major role in the degradation of misfolded proteins. The polypeptide is ATP-dependent Clp protease proteolytic subunit (Burkholderia lata (strain ATCC 17760 / DSM 23089 / LMG 22485 / NCIMB 9086 / R18194 / 383)).